Reading from the N-terminus, the 407-residue chain is Imidazolonepropionase (407 aa).

Fe(3+) is bound by residues His72 and His74. Positions 72 and 74 each coordinate Zn(2+). Positions 81, 144, and 177 each coordinate 4-imidazolone-5-propanoate. Residue Tyr144 participates in N-formimidoyl-L-glutamate binding. Position 242 (His242) interacts with Fe(3+). A Zn(2+)-binding site is contributed by His242. Gln245 lines the 4-imidazolone-5-propanoate pocket. Asp317 lines the Fe(3+) pocket. Asp317 is a Zn(2+) binding site. N-formimidoyl-L-glutamate contacts are provided by Asn319 and Gly321. Thr322 contacts 4-imidazolone-5-propanoate.

This sequence belongs to the metallo-dependent hydrolases superfamily. HutI family. Requires Zn(2+) as cofactor. It depends on Fe(3+) as a cofactor.

Its subcellular location is the cytoplasm. It carries out the reaction 4-imidazolone-5-propanoate + H2O = N-formimidoyl-L-glutamate. Its pathway is amino-acid degradation; L-histidine degradation into L-glutamate; N-formimidoyl-L-glutamate from L-histidine: step 3/3. Functionally, catalyzes the hydrolytic cleavage of the carbon-nitrogen bond in imidazolone-5-propanoate to yield N-formimidoyl-L-glutamate. It is the third step in the universal histidine degradation pathway. The protein is Imidazolonepropionase of Rhizobium rhizogenes (Agrobacterium rhizogenes).